A 349-amino-acid polypeptide reads, in one-letter code: Nicotinate-nucleotide--dimethylbenzimidazole phosphoribosyltransferase (349 aa).

E318 (proton acceptor) is an active-site residue.

Belongs to the CobT family.

It catalyses the reaction 5,6-dimethylbenzimidazole + nicotinate beta-D-ribonucleotide = alpha-ribazole 5'-phosphate + nicotinate + H(+). It functions in the pathway nucleoside biosynthesis; alpha-ribazole biosynthesis; alpha-ribazole from 5,6-dimethylbenzimidazole: step 1/2. Catalyzes the synthesis of alpha-ribazole-5'-phosphate from nicotinate mononucleotide (NAMN) and 5,6-dimethylbenzimidazole (DMB). The protein is Nicotinate-nucleotide--dimethylbenzimidazole phosphoribosyltransferase of Alkaliphilus metalliredigens (strain QYMF).